Reading from the N-terminus, the 975-residue chain is Importin-11 (975 aa).

N-acetylmethionine is present on Met-1. Positions 28–100 (AEEQLKQWET…RAGLITNFNE (73 aa)) constitute an Importin N-terminal domain. 15 HEAT repeats span residues 123–160 (RQWP…TLAS), 209–248 (ERTL…RLKQ), 318–356 (VQCM…KMAF), 422–459 (QTLT…AVGL), 473–509 (WFKN…VKFK), 511–548 (DLRP…DFEF), 555–593 (PYLE…RVNM), 600–636 (GCLV…GLGA), 640–677 (NLYP…TLEN), 683–720 (PELL…SSTE), 743–764 (EGQV…ILGP), 765–804 (QMFQ…QNTS), 819–849 (QEMD…KLSA), 850–887 (LALL…EDPE), and 957–974 (METV…FLQG). Ser-343 bears the Phosphoserine mark.

This sequence belongs to the importin beta family. Interacts with UBE2E3 and RPL12.

The protein localises to the cytoplasm. It is found in the nucleus. Functions in nuclear protein import as nuclear transport receptor. Serves as receptor for nuclear localization signals (NLS) in cargo substrates. Is thought to mediate docking of the importin/substrate complex to the nuclear pore complex (NPC) through binding to nucleoporin and the complex is subsequently translocated through the pore by an energy requiring, Ran-dependent mechanism. At the nucleoplasmic side of the NPC, Ran binds to the importin, the importin/substrate complex dissociates and importin is re-exported from the nucleus to the cytoplasm where GTP hydrolysis releases Ran. The directionality of nuclear import is thought to be conferred by an asymmetric distribution of the GTP- and GDP-bound forms of Ran between the cytoplasm and nucleus. Mediates the nuclear import of UBE2E3, and of RPL12. The sequence is that of Importin-11 (IPO11) from Homo sapiens (Human).